A 222-amino-acid chain; its full sequence is MAIIMAESSYERRVKALYEKQIRMEALEAKFIKKVYKFNSNLLDVKEAACRHQRKVGKLQKVLMERREELDKRVSFIEELDRELEATKLRDLAMKDRIKQQKMLARQRKNEIMESIHTLSKTTETYINQDALPARVKGVTVLRGDKRNQLIPFDLKSTDVEGLDSLCQHLESLNVDIAQWQQLISLAMDVAMESRAPTTPPKEAANCNSIIEIDLTSPTCHI.

A coiled-coil region spans residues arginine 51–alanine 86.

The protein belongs to the SPC25 family. Component of the Ndc80 complex, which is composed of Ndc80, Nuf2 and Spc25.

It is found in the nucleus. The protein resides in the chromosome. The protein localises to the centromere. It localises to the kinetochore. Functionally, acts as a component of the essential kinetochore-associated Ndc80 complex, which is required for chromosome segregation and spindle checkpoint activity during meiosis and mitosis. Required for kinetochore integrity and the organization of stable microtubule binding sites in the outer plate of the kinetochore. Participates in SAC signaling that responds specifically to disruptions in spindle microtubule dynamics. The NDC80 complex synergistically enhances the affinity of the SKA1 complex for microtubules and may allow the NDC80 complex to track depolymerizing microtubules. The protein is Kinetochore protein Spc25 of Drosophila simulans (Fruit fly).